The chain runs to 539 residues: T-complex protein 1 subunit zeta (539 aa).

This sequence belongs to the TCP-1 chaperonin family. As to quaternary structure, heterooligomeric complex of about 850 to 900 kDa that forms two stacked rings, 12 to 16 nm in diameter.

The protein resides in the cytoplasm. In terms of biological role, molecular chaperone; assists the folding of proteins upon ATP hydrolysis. Known to play a role, in vitro, in the folding of actin and tubulin. This chain is T-complex protein 1 subunit zeta (cct6), found in Dictyostelium discoideum (Social amoeba).